A 401-amino-acid polypeptide reads, in one-letter code: Nicotinate phosphoribosyltransferase (401 aa).

Position 221 is a phosphohistidine; by autocatalysis (His-221).

Belongs to the NAPRTase family. In terms of processing, transiently phosphorylated on a His residue during the reaction cycle. Phosphorylation strongly increases the affinity for substrates and increases the rate of nicotinate D-ribonucleotide production. Dephosphorylation regenerates the low-affinity form of the enzyme, leading to product release.

The enzyme catalyses nicotinate + 5-phospho-alpha-D-ribose 1-diphosphate + ATP + H2O = nicotinate beta-D-ribonucleotide + ADP + phosphate + diphosphate. It participates in cofactor biosynthesis; NAD(+) biosynthesis; nicotinate D-ribonucleotide from nicotinate: step 1/1. Functionally, catalyzes the synthesis of beta-nicotinate D-ribonucleotide from nicotinate and 5-phospho-D-ribose 1-phosphate at the expense of ATP. The sequence is that of Nicotinate phosphoribosyltransferase from Yersinia pseudotuberculosis serotype O:1b (strain IP 31758).